Consider the following 54-residue polypeptide: Large ribosomal subunit protein bL33 (54 aa).

It belongs to the bacterial ribosomal protein bL33 family.

The protein is Large ribosomal subunit protein bL33 of Petrotoga mobilis (strain DSM 10674 / SJ95).